Consider the following 82-residue polypeptide: MKEYGNEIELIEFIVKSLVDKEDEVKLNVIEGEKSTILELRVSQSDVGKIIGRRGRIARAIRTLLGACAAKTNRRVQLEILD.

The KH domain occupies 35–82 (STILELRVSQSDVGKIIGRRGRIARAIRTLLGACAAKTNRRVQLEILD).

It belongs to the KhpA RNA-binding protein family. In terms of assembly, forms a complex with KhpB.

It localises to the cytoplasm. In terms of biological role, a probable RNA chaperone. Forms a complex with KhpB which binds to cellular RNA and controls its expression. Plays a role in peptidoglycan (PG) homeostasis and cell length regulation. In Borreliella burgdorferi (strain ATCC 35210 / DSM 4680 / CIP 102532 / B31) (Borrelia burgdorferi), this protein is RNA-binding protein KhpA.